The sequence spans 196 residues: GTP cyclohydrolase 1 (196 aa).

The Zn(2+) site is built by Cys84, His87, and Cys157.

This sequence belongs to the GTP cyclohydrolase I family. As to quaternary structure, toroid-shaped homodecamer, composed of two pentamers of five dimers.

It carries out the reaction GTP + H2O = 7,8-dihydroneopterin 3'-triphosphate + formate + H(+). The protein operates within cofactor biosynthesis; 7,8-dihydroneopterin triphosphate biosynthesis; 7,8-dihydroneopterin triphosphate from GTP: step 1/1. The protein is GTP cyclohydrolase 1 of Corynebacterium glutamicum (strain R).